Consider the following 188-residue polypeptide: Proline-rich protein 3 (188 aa).

The disordered stretch occupies residues 1 to 157 (MPKRKKQNQH…DPQVMEDKSD (157 aa)). Pro residues-rich tracts occupy residues 35–46 (IGPPSLLGPPPM) and 69–82 (LIPPLLSLPPPPWG). The segment covering 83–96 (RGPIRRGLGPRSSP) has biased composition (low complexity). Positions 145-157 (PKDDPQVMEDKSD) are enriched in basic and acidic residues. A C3H1-type zinc finger spans residues 155 to 183 (KSDRPVCRHFAKKGHCRYEDLCAFYHPGV).

This chain is Proline-rich protein 3 (PRR3), found in Pan troglodytes (Chimpanzee).